The sequence spans 399 residues: S-adenosylmethionine synthase (399 aa).

H17 serves as a coordination point for ATP. Residue D19 participates in Mg(2+) binding. E45 provides a ligand contact to K(+). L-methionine is bound by residues E58 and Q101. The flexible loop stretch occupies residues 101–111; sequence QSADIAMGVDQ. Residues 177–179, 244–245, D253, 259–260, A276, and K280 each bind ATP; these read DGK, RF, and RK. D253 contributes to the L-methionine binding site. K284 contributes to the L-methionine binding site.

Belongs to the AdoMet synthase family. In terms of assembly, homotetramer; dimer of dimers. Mg(2+) serves as cofactor. K(+) is required as a cofactor.

It is found in the cytoplasm. It carries out the reaction L-methionine + ATP + H2O = S-adenosyl-L-methionine + phosphate + diphosphate. It participates in amino-acid biosynthesis; S-adenosyl-L-methionine biosynthesis; S-adenosyl-L-methionine from L-methionine: step 1/1. In terms of biological role, catalyzes the formation of S-adenosylmethionine (AdoMet) from methionine and ATP. The overall synthetic reaction is composed of two sequential steps, AdoMet formation and the subsequent tripolyphosphate hydrolysis which occurs prior to release of AdoMet from the enzyme. This chain is S-adenosylmethionine synthase, found in Bacillus thuringiensis (strain Al Hakam).